The sequence spans 388 residues: Formate-dependent phosphoribosylglycinamide formyltransferase (388 aa).

Residues glutamate 21–leucine 22 and glutamate 81 contribute to the N(1)-(5-phospho-beta-D-ribosyl)glycinamide site. ATP-binding positions include arginine 113, lysine 154, serine 159–glutamine 164, glutamate 193–isoleucine 196, and glutamate 201. One can recognise an ATP-grasp domain in the interval lysine 118–leucine 306. Mg(2+) contacts are provided by glutamate 265 and glutamate 277. Residues aspartate 284, lysine 352, and arginine 359–arginine 360 each bind N(1)-(5-phospho-beta-D-ribosyl)glycinamide.

Belongs to the PurK/PurT family. In terms of assembly, homodimer.

The catalysed reaction is N(1)-(5-phospho-beta-D-ribosyl)glycinamide + formate + ATP = N(2)-formyl-N(1)-(5-phospho-beta-D-ribosyl)glycinamide + ADP + phosphate + H(+). The protein operates within purine metabolism; IMP biosynthesis via de novo pathway; N(2)-formyl-N(1)-(5-phospho-D-ribosyl)glycinamide from N(1)-(5-phospho-D-ribosyl)glycinamide (formate route): step 1/1. In terms of biological role, involved in the de novo purine biosynthesis. Catalyzes the transfer of formate to 5-phospho-ribosyl-glycinamide (GAR), producing 5-phospho-ribosyl-N-formylglycinamide (FGAR). Formate is provided by PurU via hydrolysis of 10-formyl-tetrahydrofolate. This Nitratiruptor sp. (strain SB155-2) protein is Formate-dependent phosphoribosylglycinamide formyltransferase.